The following is a 130-amino-acid chain: Small ribosomal subunit protein uS9 (130 aa).

The protein belongs to the universal ribosomal protein uS9 family.

The protein is Small ribosomal subunit protein uS9 of Clostridium perfringens (strain ATCC 13124 / DSM 756 / JCM 1290 / NCIMB 6125 / NCTC 8237 / Type A).